Here is a 107-residue protein sequence, read N- to C-terminus: UPF0145 protein CHY_0465 (107 aa).

It belongs to the UPF0145 family.

This is UPF0145 protein CHY_0465 from Carboxydothermus hydrogenoformans (strain ATCC BAA-161 / DSM 6008 / Z-2901).